Here is a 630-residue protein sequence, read N- to C-terminus: A-type voltage-gated potassium channel KCND2 (630 aa).

Residues 1–184 lie on the Cytoplasmic side of the membrane; sequence MAAGVAAWLP…FENPHTSTMA (184 aa). Residues 2-20 are interaction with KCNIP1, KCNIP2, and other family members; the sequence is AAGVAAWLPFARAAAIGWM. Thr-38 carries the post-translational modification Phosphothreonine. Residues 71-90 are interaction with KCNIP1; sequence ERDFFYHPETQQYFFDRDPD. Residues His-105, Cys-111, Cys-132, and Cys-133 each contribute to the Zn(2+) site. A helical membrane pass occupies residues 185-206; that stretch reads LVFYYVTGFFIAVSVIANVVET. Residues 207–226 lie on the Extracellular side of the membrane; it reads VPCGSSPGHIKELPCGERYA. The helical transmembrane segment at 227-249 threads the bilayer; sequence VAFFCLDTACVMIFTVEYLLRLA. At 250–256 the chain is on the cytoplasmic side; it reads AAPSRYR. Residues 257–281 traverse the membrane as a helical segment; that stretch reads FVRSVMSIIDVVAILPYYIGLVMTD. At 282 to 287 the chain is on the extracellular side; that stretch reads NEDVSG. The helical; Voltage-sensor transmembrane segment at 288–307 threads the bilayer; the sequence is AFVTLRVFRVFRIFKFSRHS. At 308–321 the chain is on the cytoplasmic side; that stretch reads QGLRILGYTLKSCA. The S4-S5 linker stretch occupies residues 308–321; sequence QGLRILGYTLKSCA. A helical membrane pass occupies residues 322 to 345; it reads SELGFLLFSLTMAIIIFATVMFYA. Topologically, residues 346-357 are extracellular; sequence EKGSSASKFTSI. Residues 358–369 constitute an intramembrane region (helical); sequence PAAFWYTIVTMT. Residues Thr-370, Leu-371, Gly-372, and Tyr-373 each coordinate K(+). Positions 370 to 375 match the Selectivity filter motif; sequence TLGYGD. The stretch at 370–377 is an intramembrane region; it reads TLGYGDMV. The Extracellular portion of the chain corresponds to 378-380; it reads PKT. Residues 381–403 traverse the membrane as a helical segment; that stretch reads IAGKIFGSICSLSGVLVIALPVP. Over 404-630 the chain is Cytoplasmic; that stretch reads VIVSNFSRIY…GGNIVRVSAL (227 aa). Positions 474–489 are required for dendritic targeting; it reads FETQHHHLLHCLEKTT. The interval 474–630 is important for normal channel activation and inactivation, for interaction with KCNIP2, and probably other family members as well; that stretch reads FETQHHHLLH…GGNIVRVSAL (157 aa). A phosphoserine mark is found at Ser-548, Ser-552, Ser-572, and Ser-575. Residues 600 to 622 form a disordered region; that stretch reads IPTPPVTTPEGDDRPESPEYSGG. Thr-602 and Thr-607 each carry phosphothreonine. A Phosphoserine modification is found at Ser-616. A PDZ-binding motif is present at residues 627–630; sequence VSAL.

It belongs to the potassium channel family. D (Shal) (TC 1.A.1.2) subfamily. Kv4.2/KCND2 sub-subfamily. Homotetramer or heterotetramer with KCND1 or KCND3. Associates with the regulatory subunits KCNIP2, KCNIP3 and KCNIP4. Interacts with the regulatory subunit KCNIP1; this interaction mediates the capture of both the N- and C-terminus of KCND2, preventing N-type inactivation and stabilizing the S6 conformation, thereby accelerating closed state inactivation and recovery. In vivo, probably exists as heteromeric complex containing variable proportions of KCND1, KCND2, KCND3, KCNIP1, KCNIP2, KCNIP3, KCNIP4, DPP6 and DPP10. The tetrameric channel can associate with up to four regulatory subunits, such as KCNIP2 or KCNIP4. Interaction with four KCNIP4 chains does not reduce interaction with DPP10. Interacts with DLG4 and NCS1/FREQ. Interacts with DLG1. Probably part of a complex consisting of KCNIP1, KCNIP2 isoform 3 and KCND2. Interacts with FLNA, FLNC and DPP10. Identified in a complex with cAMP-dependent protein kinase (PKA), CAV3, AKAP6 and KCND3 in cardiac myocytes. Interacts (via S1 and S2 helices) with DPP6; this interaction stabilizes the conformation of the S1-S2 helices and facilitates S4 conformational change, including S4 sliding up and down, thereby accelerating activation, inactivation, and recovery. In terms of processing, phosphorylation in response to MAPK activation is increased in stimulated dendrites. Interaction with KCNIP2 and DPP6 propomtes phosphorylation by PKA at Ser-552. Phosphorylation at Ser-552 has no effect on interaction with KCNIP3, but is required for the regulation of channel activity by KCNIP3. Phosphorylation at Ser-552 leads to KCND2 internalization. Phosphorylated by MAPK in response to signaling via the metabotropic glutamate receptor GRM5. Phosphorylation at Ser-616 is required for the down-regulation of neuronal A-type currents in response to signaling via GRM5.

Its subcellular location is the cell membrane. It is found in the cell projection. It localises to the dendrite. The protein resides in the synapse. The protein localises to the perikaryon. Its subcellular location is the postsynaptic cell membrane. It is found in the dendritic spine. It localises to the sarcolemma. The protein resides in the cell junction. The protein localises to the membrane. Its subcellular location is the caveola. It carries out the reaction K(+)(in) = K(+)(out). In terms of biological role, voltage-gated potassium channel that mediates transmembrane potassium transport in excitable membranes, primarily in the brain, but also in rodent heart. Mediates the major part of the dendritic A-type current I(SA) in brain neurons. This current is activated at membrane potentials that are below the threshold for action potentials. It regulates neuronal excitability, prolongs the latency before the first spike in a series of action potentials, regulates the frequency of repetitive action potential firing, shortens the duration of action potentials and regulates the back-propagation of action potentials from the neuronal cell body to the dendrites. Contributes to the regulation of the circadian rhythm of action potential firing in suprachiasmatic nucleus neurons, which regulates the circadian rhythm of locomotor activity. Functions downstream of the metabotropic glutamate receptor GRM5 and plays a role in neuronal excitability and in nociception mediated by activation of GRM5. Mediates the transient outward current I(to) in rodent heart left ventricle apex cells, but not in human heart, where this current is mediated by another family member. Forms tetrameric potassium-selective channels through which potassium ions pass in accordance with their electrochemical gradient. The channel alternates between opened and closed conformations in response to the voltage difference across the membrane. Can form functional homotetrameric channels and heterotetrameric channels that contain variable proportions of KCND2 and KCND3; channel properties depend on the type of pore-forming alpha subunits that are part of the channel. In vivo, membranes probably contain a mixture of heteromeric potassium channel complexes. Interaction with specific isoforms of the regulatory subunits KCNIP1, KCNIP2, KCNIP3 or KCNIP4 strongly increases expression at the cell surface and thereby increases channel activity; it modulates the kinetics of channel activation and inactivation, shifts the threshold for channel activation to more negative voltage values, shifts the threshold for inactivation to less negative voltages and accelerates recovery after inactivation. Likewise, interaction with DPP6 or DPP10 promotes expression at the cell membrane and regulates both channel characteristics and activity. Upon depolarization, the channel goes from a resting closed state (C state) to an activated but non-conducting state (C* state), from there, the channel may either inactivate (I state) or open (O state). The chain is A-type voltage-gated potassium channel KCND2 from Mustela putorius furo (European domestic ferret).